The chain runs to 472 residues: Minor capsid protein L2 (472 aa).

Positions 1 to 12 (MVAVRAPRRKRA) match the Nuclear localization signal motif. Cys-21 and Cys-27 are joined by a disulfide. The Nuclear localization signal signature appears at 453 to 461 (LIHKRRKRM).

This sequence belongs to the papillomaviridae L2 protein family. As to quaternary structure, interacts with major capsid protein L1. Interacts with E2; this interaction inhibits E2 transcriptional activity but not the DNA replication function E2. Interacts with host GADD45GIP1. Interacts with host HSPA8; this interaction is required for L2 nuclear translocation. Interacts with host importins KPNB2 and KPNB3. Forms a complex with importin alpha2-beta1 heterodimers via interaction with the importin alpha2 adapter. Interacts with host DYNLT1; this interaction is essential for virus intracellular transport during entry. Interacts (via C-terminus) with host retromer subunits VPS35 and VPS29. Post-translationally, highly phosphorylated.

It is found in the virion. It localises to the host nucleus. Its subcellular location is the host early endosome. The protein resides in the host Golgi apparatus. Functionally, minor protein of the capsid that localizes along the inner surface of the virion, within the central cavities beneath the L1 pentamers. Plays a role in capsid stabilization through interaction with the major capsid protein L1. Once the virion enters the host cell, L2 escorts the genomic DNA into the nucleus by promoting escape from the endosomal compartments and traffic through the host Golgi network. Mechanistically, the C-terminus of L2 possesses a cell-penetrating peptide that protudes from the host endosome, interacts with host cytoplasmic retromer cargo and thereby mediates the capsid delivery to the host trans-Golgi network. Plays a role through its interaction with host dynein in the intracellular microtubule-dependent transport of viral capsid toward the nucleus. Mediates the viral genome import into the nucleus through binding to host importins. Once within the nucleus, L2 localizes viral genomes to host PML bodies in order to activate early gene expression for establishment of infection. Later on, promotes late gene expression by interacting with the viral E2 protein and by inhibiting its transcriptional activation functions. During virion assembly, encapsidates the genome by direct interaction with the viral DNA. This Homo sapiens (Human) protein is Minor capsid protein L2.